A 1254-amino-acid chain; its full sequence is Structural polyprotein (1254 aa).

Residues Leu-43–Lys-77 form a host transcription inhibition region. Residues Thr-60–Glu-112 are disordered. The Nuclear localization signal signature appears at Gln-70 to Pro-108. Residues Lys-84–Arg-110 show a composition bias toward basic residues. Residues Gln-95–Ile-123 form a binding to the viral RNA region. The tract at residues Pro-108 to Cys-122 is ribosome-binding. A disulfide bridge connects residues Cys-122 and Cys-137. The Peptidase S3 domain occupies Cys-122–Trp-270. Catalysis depends on His-148, which acts as the Charge relay system. The Nuclear export signal signature appears at Ile-153–Tyr-163. Residues Lys-164–Tyr-169 form an interaction with spike glycoprotein E2 region. Asp-170 (charge relay system) is an active-site residue. The segment at Pro-192–Ala-202 is dimerization of the capsid protein. The active-site Charge relay system is the Ser-222. The dimerization of the capsid protein stretch occupies residues Asp-228–Arg-232. At Trp-270–Gly-694 the chain is on the extracellular side. The segment at Ser-271–Thr-282 is functions as an uncleaved signal peptide for the precursor of protein E3/E2. 3 disulfide bridges follow: Cys-277/Cys-286, Cys-291/Cys-295, and Cys-294/Cys-326. A glycan (N-linked (GlcNAc...) asparagine; by host) is linked at Asn-281. Residue Asn-328 is glycosylated (N-linked (GlcNAc...) asparagine; by host). Intrachain disulfides connect Cys-353/Cys-459, Cys-356/Cys-362, Cys-425/Cys-439, Cys-487/Cys-599, Cys-535/Cys-559, and Cys-537/Cys-554. 2 interaction with host Mxra8 receptor regions span residues Tyr-360–Tyr-363 and His-396–His-398. The tract at residues Thr-518–Asn-521 is interaction with host Mxra8 receptor. N-linked (GlcNAc...) asparagine; by host glycosylation is present at Asn-534. The interval Thr-550–Ile-556 is interaction with host Mxra8 receptor. A glycan (N-linked (GlcNAc...) asparagine; by host) is linked at Asn-596. A helical transmembrane segment spans residues Leu-695–Leu-715. Over Ala-716 to Ala-756 the chain is Cytoplasmic. Cys-719 is lipidated: S-palmitoyl cysteine; by host. An interaction with the capsid protein region spans residues Thr-724 to Lys-728. Residues Cys-729 and Cys-750 are each lipidated (S-palmitoyl cysteine; by host). Residues Cys-729–Xaa-749 form a transient transmembrane before p62-6K protein processing region. A disulfide bridge connects residues Cys-729 and Cys-750. The Extracellular portion of the chain corresponds to Ala-757–Lys-771. The chain crosses the membrane as a helical span at residues Thr-772–Ile-792. A topological domain (cytoplasmic) is located at residue Lys-793. Residues Ser-794 to Ala-814 traverse the membrane as a helical segment. At Lys-815 to Ser-1231 the chain is on the extracellular side. 4 disulfides stabilise this stretch: Cys-865–Cys-930, Cys-878–Cys-910, Cys-879–Cys-912, and Cys-884–Cys-894. The tract at residues Val-900–Thr-917 is E1 fusion peptide loop. Residue Asn-957 is glycosylated (N-linked (GlcNAc...) asparagine; by host). 4 disulfides stabilise this stretch: Cys-1075–Cys-1087, Cys-1117–Cys-1192, Cys-1122–Cys-1196, and Cys-1144–Cys-1186. A helical membrane pass occupies residues Gly-1232–Met-1252. Cys-1249 is lipidated: S-palmitoyl cysteine; by host. Residue Cys-1249 is the site of S-stearoyl cysteine; by host attachment. Topologically, residues Arg-1253–Arg-1254 are cytoplasmic.

In terms of assembly, homodimer. Homomultimer. Interacts with host karyopherin KPNA4; this interaction allows the nuclear import of the viral capsid protein. Interacts with spike glycoprotein E2. Interacts with host IRAK1; the interaction leads to inhibition of IRAK1-dependent signaling. The precursor of protein E3/E2 and E1 form a heterodimer shortly after synthesis. As to quaternary structure, the precursor of protein E3/E2 and E1 form a heterodimer shortly after synthesis. Processing of the precursor of protein E3/E2 into E2 and E3 results in a heterodimer of the spike glycoproteins E2 and E1. Spike at virion surface are constituted of a trimer of E2-E1 heterodimers. After target cell attachment and endocytosis, E1 change conformation to form homotrimers. Interacts with 6K protein. In terms of assembly, interacts with spike glycoprotein E1. Processing of the precursor of protein E3/E2 into E2 and E3 results in a heterodimer of the spike glycoproteins E2 and E1. Spike at virion surface are constituted of a trimer of E2-E1 heterodimers. Interacts with 6K protein. Interacts with host MXRA8; this interaction mediates virus entry. Structural polyprotein: Specific enzymatic cleavages in vivo yield mature proteins. Capsid protein is auto-cleaved during polyprotein translation, unmasking a signal peptide at the N-terminus of the precursor of E3/E2. The remaining polyprotein is then targeted to the host endoplasmic reticulum, where host signal peptidase cleaves it into pE2, 6K and E1 proteins. pE2 is further processed to mature E3 and E2 by host furin in trans-Golgi vesicle. In terms of processing, palmitoylated via thioester bonds. These palmitoylations may induce disruption of the C-terminus transmembrane. This would result in the reorientation of E2 C-terminus from lumenal to cytoplasmic side. Post-translationally, N-glycosylated. Palmitoylated via thioester bonds.

The protein localises to the virion. It is found in the host cytoplasm. The protein resides in the host cell membrane. Its subcellular location is the host nucleus. It localises to the virion membrane. The protein localises to the host Golgi apparatus. It is found in the host trans-Golgi network. The protein resides in the host endoplasmic reticulum. The enzyme catalyses Autocatalytic release of the core protein from the N-terminus of the togavirus structural polyprotein by hydrolysis of a -Trp-|-Ser- bond.. In terms of biological role, forms an icosahedral capsid with a T=4 symmetry composed of 240 copies of the capsid protein surrounded by a lipid membrane through which penetrate 80 spikes composed of trimers of E1-E2 heterodimers. The capsid protein binds to the viral RNA genome at a site adjacent to a ribosome binding site for viral genome translation following genome release. Possesses a protease activity that results in its autocatalytic cleavage from the nascent structural protein. Following its self-cleavage, the capsid protein transiently associates with ribosomes, and within several minutes the protein binds to viral RNA and rapidly assembles into icosahedric core particles. The resulting nucleocapsid eventually associates with the cytoplasmic domain of the spike glycoprotein E2 at the cell membrane, leading to budding and formation of mature virions. In case of infection, new virions attach to target cells and after clathrin-mediated endocytosis their membrane fuses with the host endosomal membrane. This leads to the release of the nucleocapsid into the cytoplasm, followed by an uncoating event necessary for the genomic RNA to become accessible. The uncoating might be triggered by the interaction of capsid proteins with ribosomes. Binding of ribosomes would release the genomic RNA since the same region is genomic RNA-binding and ribosome-binding. Specifically inhibits interleukin-1 receptor-associated kinase 1/IRAK1-dependent signaling during viral entry, representing a means by which the alphaviruses may evade innate immune detection and activation prior to viral gene expression. Functionally, provides the signal sequence for the translocation of the precursor of protein E3/E2 to the host endoplasmic reticulum. Furin-cleaved E3 remains associated with spike glycoprotein E1 and mediates pH protection of the latter during the transport via the secretory pathway. After virion release from the host cell, the assembly protein E3 is gradually released in the extracellular space. Its function is as follows. Plays a role in viral attachment to target host cell, by binding to the cell receptor MXRA8. The host LDLR may also act as a cell receptor for viral entry. Synthesized as a p62 precursor which is processed by furin at the cell membrane just before virion budding, giving rise to E2-E1 heterodimer. The p62-E1 heterodimer is stable, whereas E2-E1 is unstable and dissociate at low pH. p62 is processed at the last step, presumably to avoid E1 fusion activation before its final export to cell surface. E2 C-terminus contains a transitory transmembrane that would be disrupted by palmitoylation, resulting in reorientation of the C-terminal tail from lumenal to cytoplasmic side. This step is critical since E2 C-terminus is involved in budding by interacting with capsid proteins. This release of E2 C-terminus in cytoplasm occurs lately in protein export, and precludes premature assembly of particles at the endoplasmic reticulum membrane. Acts as a viroporin that participates in virus glycoprotein processing and transport to the plasma membrane, cell permeabilization and budding of viral particles. The cation channel is permeable to Na(+)&gt;K(+)&gt;Ca(2+) in vitro. Disrupts the calcium homeostasis of the cell, probably at the endoplasmic reticulum level. This leads to cytoplasmic calcium elevation. Because of its lipophilic properties, the 6K protein is postulated to influence the selection of lipids that interact with the transmembrane domains of the glycoproteins, which, in turn, affects the deformability of the bilayer required for the extreme curvature that occurs as budding proceeds. Present in low amount in virions, about 3% compared to viral glycoproteins. In terms of biological role, class II viral fusion protein. Fusion activity is inactive as long as E1 is bound to E2 in mature virion. After virus attachment to target cell via host MXRA8 and endocytosis, acidification of the endosome induce dissociation of E1/E2 heterodimer and concomitant trimerization of the E1 subunits. This E1 trimer is fusion active, and promotes release of viral nucleocapsid in cytoplasm after endosome and viral membrane fusion. Efficient fusion requires the presence of cholesterol and sphingolipid in the target membrane. This chain is Structural polyprotein, found in Ross river virus (strain NB5092) (RRV).